A 237-amino-acid chain; its full sequence is uncharacterized protein (237 aa).

The region spanning 4 to 237 is the GP-PDE domain; it reads QFLIAHRGYS…VKFQIAAQLY (234 aa).

The protein to glycerophosphoryl diester phosphodiesterases (EC 3.1.4.46). It to M.genitalium MG293.

This is an uncharacterized protein from Mycoplasma pneumoniae (strain ATCC 29342 / M129 / Subtype 1) (Mycoplasmoides pneumoniae).